Consider the following 150-residue polypeptide: Snaclec bothrojaracin subunit beta (150 aa).

Residues 1–23 (MGRFIFVSFGLLVVFLSLSGTAA) form the signal peptide. 3 disulfides stabilise this stretch: C25–C36, C53–C146, and C123–C138. Positions 32–147 (YEGSCYRVFE…CTKLEYFVCE (116 aa)) constitute a C-type lectin domain.

The protein belongs to the snaclec family. In terms of assembly, heterodimer of subunits alpha and beta; disulfide-linked. In terms of tissue distribution, expressed by the venom gland.

The protein localises to the secreted. In terms of biological role, this potent antithrombotic agent acts in a calcium-independent manner. Exerts its anticoagulant effect by two distinct mechanisms. It binds to activated thrombin through exosite 1, blocking fibrinogen clotting, platelet activation, factor V activation and other effects, and it interacts with prothrombin (F2), decreasing its proteolytic activation -especially in the presence of factor Va. In vivo, intravenous injection before thrombosis induction causes a significant decrease in thrombus weight. Furthermore, BJC shows a prolonged effect by remaining in the plasma bound to prothrombin for at least 12 hours. This chain is Snaclec bothrojaracin subunit beta, found in Bothrops jararaca (Jararaca).